The primary structure comprises 1058 residues: Non-canonical non-ribosomal peptide synthetase FUB8 (1058 aa).

Positions 43-365 are adenylation (A) domain; it reads EISRDEPDRV…LASVVMHPDE (323 aa). Residues 566-643 form the Carrier domain; the sequence is TTEDVVRSGI…QLSHSVWTHL (78 aa). O-(pantetheine 4'-phosphoryl)serine is present on serine 601. Positions 680–921 are thioester reductase (TR) domain; the sequence is LTGTTGEIGS…IPIDLLAEVI (242 aa).

Its pathway is mycotoxin biosynthesis. In terms of biological role, non-canonical non-ribosomal peptide synthetase; part of the gene cluster that mediates the biosynthesis of fusaric acid, a mycotoxin with low to moderate toxicity to animals and humans, but with high phytotoxic properties. L-aspartate is suggested as fusaric acid amino acid precursor that is activated and further processed to O-acetyl-L-homoserine by cluster enzymes aspartate kinase FUB3 and homoserine O-acetyltransferase FUB5, as well as enzymes of the primary metabolism. The polyketide synthase (PKS) FUB1 generates the triketide trans-2-hexenal which is presumptively released by the hydrolase FUB4 and linked to the NRPS-bound amino acid precursor by NAD(P)-dependent dehydrogenase FUB6. FUB1, FUB4, and the non-canonical NRPS Fub8 may form an enzyme complex. Further processing of the NRPS-bound intermediate might be carried out by FUB6 and the sulfhydrylase FUB7, enabling a spontaneous electrocyclization to close the carbon backbone of fusaric acid. Dihydrofusaric acid is likely to be released via reduction by the thioester reductase (TR) domain of FUB8 whereupon the final oxidation to fusaric acid may (also) be performed by the FMN-dependent dehydrogenase FUB9. In Gibberella moniliformis (strain M3125 / FGSC 7600) (Maize ear and stalk rot fungus), this protein is Non-canonical non-ribosomal peptide synthetase FUB8.